A 91-amino-acid polypeptide reads, in one-letter code: Molybdopterin synthase sulfur carrier subunit (91 aa).

A 1-thioglycine; alternate modification is found at glycine 91. Glycine 91 carries the glycyl adenylate; alternate modification.

This sequence belongs to the MoaD family. MOCS2A subfamily. Heterotetramer; composed of 2 small (MOCS2A) and 2 large (MOCS2B) subunits. C-terminal thiocarboxylation occurs in 2 steps, it is first acyl-adenylated (-COAMP) via the hesA/moeB/thiF part of MOCS3, then thiocarboxylated (-COSH) via the rhodanese domain of MOCS3.

It is found in the cytoplasm. The protein operates within cofactor biosynthesis; molybdopterin biosynthesis. Functionally, acts as a sulfur carrier required for molybdopterin biosynthesis. Component of the molybdopterin synthase complex that catalyzes the conversion of precursor Z into molybdopterin by mediating the incorporation of 2 sulfur atoms into precursor Z to generate a dithiolene group. In the complex, serves as sulfur donor by being thiocarboxylated (-COSH) at its C-terminus by MOCS3. After interaction with MOCS2B, the sulfur is then transferred to precursor Z to form molybdopterin. In Anopheles gambiae (African malaria mosquito), this protein is Molybdopterin synthase sulfur carrier subunit.